Here is a 325-residue protein sequence, read N- to C-terminus: MTVAVVGCGRIGAMYAHHLDALGPHHLVCVDAEPARAEKLAQETASATVAASVGELVARGCDAALVTAGTTAHPELVEALVEAGVPTLCEKPLAIDLPRTEALGTLAERHGVPLWVGFQRHFDPGFADLRARTVAGRLGRVQLLRLVSHDVSPPPVDRLRQSGTVFTDLMLHDFDMVRWLTGREIVQVVADGAALSCPELADIGDFDTVTAMVRLDDDTLGVLSAGRWQPLGYDVRAEVLGERGNLENGPTGANAPGAGGEAPRFRGYWDRFATAYRAQVRAFLTMAAGGPADPAAGTWRDSHDALRCALAAERSATSGSVPVAP.

Belongs to the Gfo/Idh/MocA family.

The enzyme catalyses myo-inositol + NAD(+) = myo-inosose-5 + NADH + H(+). The protein operates within antibiotic biosynthesis. In terms of biological role, dehydrogenase involved in the biosynthesis of the aminocyclitol moiety of hygromycin A, a broad-spectrum antibiotic. Catalyzes the NAD(+)-dependent oxidation of myo-inositol to myo-inosose-5 (neo-inosose). Shows reduced activity with scyllo-inositol, minimal activity with L-chiro-inositol and no activity with D-glucose, D-chiro-inositol, epi-inositol, muco-inositol and allo-inositol. Is specific for NAD(+) and cannot use NADP(+). This Streptomyces leeuwenhoekii protein is Myo-inositol dehydrogenase Hyg17.